The primary structure comprises 682 residues: Beta-galactosidase (682 aa).

A signal peptide spans 1 to 23; it reads MPGFLVRILPLLLPLLLLGPTRG. Residues 24 to 28 constitute a propeptide that is removed on maturation; that stretch reads LRNAT. N-linked (GlcNAc...) asparagine glycosylation occurs at N26. Substrate contacts are provided by Y83, E129, and N187. E188 functions as the Proton donor in the catalytic mechanism. The cysteines at positions 195 and 230 are disulfide-linked. An N-linked (GlcNAc...) asparagine glycan is attached at N247. Catalysis depends on E268, which acts as the Nucleophile. Residue Y333 coordinates substrate. N-linked (GlcNAc...) asparagine glycans are attached at residues N464, N498, N545, and N555. The cysteines at positions 626 and 634 are disulfide-linked.

The protein belongs to the glycosyl hydrolase 35 family. Homodimer. May form higher multimers.

Its subcellular location is the lysosome. It catalyses the reaction Hydrolysis of terminal non-reducing beta-D-galactose residues in beta-D-galactosides.. Functionally, cleaves beta-linked terminal galactosyl residues from gangliosides, glycoproteins, and glycosaminoglycans. This chain is Beta-galactosidase (GLB1), found in Macaca fascicularis (Crab-eating macaque).